Reading from the N-terminus, the 593-residue chain is Eukaryotic peptide chain release factor subunit 1 (593 aa).

The protein belongs to the eukaryotic release factor 1 family. In terms of assembly, heterodimer of two subunits, one of which binds GTP.

It localises to the cytoplasm. Directs the termination of nascent peptide synthesis (translation) in response to the termination codons UAA, UAG and UGA. This chain is Eukaryotic peptide chain release factor subunit 1, found in Caenorhabditis elegans.